A 468-amino-acid polypeptide reads, in one-letter code: 3-isopropylmalate dehydratase large subunit (468 aa).

3 residues coordinate [4Fe-4S] cluster: Cys349, Cys409, and Cys412.

Belongs to the aconitase/IPM isomerase family. LeuC type 1 subfamily. In terms of assembly, heterodimer of LeuC and LeuD. [4Fe-4S] cluster serves as cofactor.

It catalyses the reaction (2R,3S)-3-isopropylmalate = (2S)-2-isopropylmalate. The protein operates within amino-acid biosynthesis; L-leucine biosynthesis; L-leucine from 3-methyl-2-oxobutanoate: step 2/4. Functionally, catalyzes the isomerization between 2-isopropylmalate and 3-isopropylmalate, via the formation of 2-isopropylmaleate. The sequence is that of 3-isopropylmalate dehydratase large subunit from Shewanella baltica (strain OS223).